The following is a 359-amino-acid chain: uncharacterized protein (359 aa).

ATP is bound at residue Gly-46–Ser-53.

It belongs to the archaeal ATPase family.

This is an uncharacterized protein from Methanocaldococcus jannaschii (strain ATCC 43067 / DSM 2661 / JAL-1 / JCM 10045 / NBRC 100440) (Methanococcus jannaschii).